The following is a 261-amino-acid chain: Hydroxyethylthiazole kinase (261 aa).

M45 is a substrate binding site. 2 residues coordinate ATP: R121 and S167. G194 is a substrate binding site.

Belongs to the Thz kinase family. It depends on Mg(2+) as a cofactor.

The catalysed reaction is 5-(2-hydroxyethyl)-4-methylthiazole + ATP = 4-methyl-5-(2-phosphooxyethyl)-thiazole + ADP + H(+). Its pathway is cofactor biosynthesis; thiamine diphosphate biosynthesis; 4-methyl-5-(2-phosphoethyl)-thiazole from 5-(2-hydroxyethyl)-4-methylthiazole: step 1/1. Catalyzes the phosphorylation of the hydroxyl group of 4-methyl-5-beta-hydroxyethylthiazole (THZ). In Vibrio atlanticus (strain LGP32) (Vibrio splendidus (strain Mel32)), this protein is Hydroxyethylthiazole kinase.